The chain runs to 257 residues: Serine/arginine-rich splicing factor 1 (257 aa).

The residue at position 2 (serine 2) is an N-acetylserine. The RRM 1 domain occupies 16–91 (CRIYVGNLPP…YRLRVEFPRS (76 aa)). Positions 88–116 (FPRSGRGTGRGGGGGGGGGAPRGRYGPPS) are disordered. Residues 93–108 (RGTGRGGGGGGGGGAP) are compositionally biased toward gly residues. The RRM 2 domain occupies 121–195 (YRVIVSGLPP…ETAYIRVKVD (75 aa)).

The protein localises to the cytoplasm. The protein resides in the nucleus speckle. In terms of biological role, may play a role in preventing exon skipping, ensuring the accuracy of splicing and regulating alternative splicing. This is Serine/arginine-rich splicing factor 1 (SRSF1) from Gallus gallus (Chicken).